Reading from the N-terminus, the 122-residue chain is Large ribosomal subunit protein uL14 (122 aa).

This sequence belongs to the universal ribosomal protein uL14 family. Part of the 50S ribosomal subunit. Forms a cluster with proteins L3 and L19. In the 70S ribosome, L14 and L19 interact and together make contacts with the 16S rRNA in bridges B5 and B8.

Its function is as follows. Binds to 23S rRNA. Forms part of two intersubunit bridges in the 70S ribosome. The polypeptide is Large ribosomal subunit protein uL14 (Alkalilimnicola ehrlichii (strain ATCC BAA-1101 / DSM 17681 / MLHE-1)).